Consider the following 722-residue polypeptide: Peroxisomal bifunctional enzyme (722 aa).

The tract at residues 1–281 (MAEYLRLPHS…FAEKSANKWS (281 aa)) is enoyl-CoA hydratase / isomerase. Alanine 2 is subject to Blocked amino end (Ala). Lysine 38 bears the N6-succinyllysine mark. Residue glycine 100 participates in substrate binding. Position 173 is an N6-acetyllysine; alternate (lysine 173). Position 173 is an N6-succinyllysine; alternate (lysine 173). Position 182 is an N6-succinyllysine (lysine 182). 2 positions are modified to N6-acetyllysine; alternate: lysine 190 and lysine 218. An N6-succinyllysine; alternate mark is found at lysine 190 and lysine 218. Lysine 241 is subject to N6-succinyllysine. N6-acetyllysine is present on lysine 249. At lysine 253 the chain carries N6-succinyllysine. The residue at position 275 (lysine 275) is an N6-acetyllysine; alternate. At lysine 275 the chain carries N6-succinyllysine; alternate. An N6-succinyllysine mark is found at lysine 279, lysine 289, and lysine 330. Residues 282–571 (TPSGASWKTA…DMLCEAGRFG (290 aa)) form a 3-hydroxyacyl-CoA dehydrogenase region. Residues lysine 345, lysine 359, and lysine 463 each carry the N6-acetyllysine modification. The residue at position 531 (lysine 531) is an N6-succinyllysine. A Phosphothreonine modification is found at threonine 547. Lysine 576 carries the N6-succinyllysine modification. Lysine 583, lysine 590, and lysine 709 each carry N6-acetyllysine; alternate. Lysine 583, lysine 590, and lysine 709 each carry N6-succinyllysine; alternate. Positions 720-722 (SKL) match the Microbody targeting signal motif. An N6-succinyllysine modification is found at lysine 721.

It in the N-terminal section; belongs to the enoyl-CoA hydratase/isomerase family. In the C-terminal section; belongs to the 3-hydroxyacyl-CoA dehydrogenase family. As to quaternary structure, monomer. Post-translationally, acetylated, leading to enhanced enzyme activity. Acetylation is enhanced by up to 80% after treatment either with trichostin A (TCA) or with nicotinamide (NAM) with highest increase on Lys-345. Acetylation and enzyme activity increased by about 1.5% on addition of fatty acids.

The protein resides in the peroxisome. It carries out the reaction a (3S)-3-hydroxyacyl-CoA = a (2E)-enoyl-CoA + H2O. The enzyme catalyses a 4-saturated-(3S)-3-hydroxyacyl-CoA = a (3E)-enoyl-CoA + H2O. The catalysed reaction is a (3Z)-enoyl-CoA = a 4-saturated (2E)-enoyl-CoA. It catalyses the reaction a (3E)-enoyl-CoA = a 4-saturated (2E)-enoyl-CoA. It carries out the reaction a (3S)-3-hydroxyacyl-CoA + NAD(+) = a 3-oxoacyl-CoA + NADH + H(+). The enzyme catalyses (2S,3S)-3-hydroxy-2-methylbutanoyl-CoA = (2E)-2-methylbut-2-enoyl-CoA + H2O. The catalysed reaction is (3E,5Z)-tetradecadienoyl-CoA = (2E,5Z)-tetradecadienoyl-CoA. It catalyses the reaction (3E,5Z)-octadienoyl-CoA = (2E,5Z)-octadienoyl-CoA. It carries out the reaction (3S)-hydroxydecanoyl-CoA + NAD(+) = 3-oxodecanoyl-CoA + NADH + H(+). The enzyme catalyses (3E)-decenoyl-CoA = (2E)-decenoyl-CoA. The catalysed reaction is (3Z)-hexenoyl-CoA = (2E)-hexenoyl-CoA. It catalyses the reaction (3E)-hexenoyl-CoA = (2E)-hexenoyl-CoA. It carries out the reaction (3S)-hydroxydecanoyl-CoA = (2E)-decenoyl-CoA + H2O. The enzyme catalyses (3S)-hydroxyhexanoyl-CoA = (2E)-hexenoyl-CoA + H2O. The catalysed reaction is (3S)-hydroxyhexadecanoyl-CoA + NAD(+) = 3-oxohexadecanoyl-CoA + NADH + H(+). It catalyses the reaction (3S)-hydroxyhexadecanoyl-CoA = (2E)-hexadecenoyl-CoA + H2O. It carries out the reaction (2E)-hexadecenedioyl-CoA + H2O = (3S)-hydroxyhexadecanedioyl-CoA. The enzyme catalyses (3S)-hydroxyhexadecanedioyl-CoA + NAD(+) = 3-oxohexadecanedioyl-CoA + NADH + H(+). It functions in the pathway lipid metabolism; fatty acid beta-oxidation. Its activity is regulated as follows. Enzyme activity enhanced by acetylation. Functionally, peroxisomal trifunctional enzyme possessing 2-enoyl-CoA hydratase, 3-hydroxyacyl-CoA dehydrogenase, and delta 3, delta 2-enoyl-CoA isomerase activities. Catalyzes two of the four reactions of the long chain fatty acids peroxisomal beta-oxidation pathway. Can also use branched-chain fatty acids such as 2-methyl-2E-butenoyl-CoA as a substrate, which is hydrated into (2S,3S)-3-hydroxy-2-methylbutanoyl-CoA. Optimal isomerase for 2,5 double bonds into 3,5 form isomerization in a range of enoyl-CoA species. Also able to isomerize both 3-cis and 3-trans double bonds into the 2-trans form in a range of enoyl-CoA species. Regulates the amount of medium-chain dicarboxylic fatty acids which are essential regulators of all fatty acid oxidation pathways. Also involved in the degradation of long-chain dicarboxylic acids through peroxisomal beta-oxidation. This is Peroxisomal bifunctional enzyme from Rattus norvegicus (Rat).